The following is a 564-amino-acid chain: Nucleolus and neural progenitor protein (564 aa).

The tract at residues 431-495 (GSRTSTSEHP…KRRCSGTVQR (65 aa)) is disordered. The span at 442–459 (RQRRSKYKVLSRQRKPQR) shows a compositional bias: basic residues. Residues 442 to 460 (RQRRSKYKVLSRQRKPQRK) form a nuclear localization signal region. The span at 460–473 (KLQSTLLKETQQVP) shows a compositional bias: polar residues.

Belongs to the nepro family.

Its subcellular location is the nucleus. The protein localises to the nucleolus. Functionally, may play a role in cortex development as part of the Notch signaling pathway. Downstream of Notch may repress the expression of proneural genes and inhibit neuronal differentiation thereby maintaining neural progenitors. May also play a role in preimplentation embryo development. The sequence is that of Nucleolus and neural progenitor protein from Mus musculus (Mouse).